The sequence spans 281 residues: Tetraspanin-5 (281 aa).

At 1–7 (MNRMSNT) the chain is on the cytoplasmic side. Residues 8–28 (VIGFLNILTLISSIVLLGSAL) form a helical membrane-spanning segment. Topologically, residues 29-44 (WMGRSKTTCEHFLQKP) are extracellular. A helical transmembrane segment spans residues 45–65 (LLILGLAILILSVAGLVGACC). Over 66–74 (DVAWVLWVY) the chain is Cytoplasmic. Residues 75–95 (LFFMVFIIVALMGLTLFGFIV) traverse the membrane as a helical segment. The Extracellular segment spans residues 96-221 (TSHSGGVVVD…TVRRDWHKLS (126 aa)). A helical membrane pass occupies residues 222-242 (LVNVIVVIFLIAVYCVGCCAF). The Cytoplasmic portion of the chain corresponds to 243–281 (KNAKRPQHYGFPYGRYGMSKSRPGWEQSWSRWWHGRDRY).

Belongs to the tetraspanin (TM4SF) family.

The protein resides in the membrane. Its function is as follows. May be involved in the regulation of cell differentiation. This chain is Tetraspanin-5 (TET5), found in Arabidopsis thaliana (Mouse-ear cress).